Consider the following 652-residue polypeptide: DNA ligase (652 aa).

NAD(+) is bound by residues 29-33 (DAEYD), 78-79 (SL), and E107. The active-site N6-AMP-lysine intermediate is the K109. NAD(+)-binding residues include R130, E164, K278, and K302. Zn(2+) is bound by residues C395, C398, C413, and C418. A BRCT domain is found at 577-652 (DENAALSGMT…IKDEAWLESL (76 aa)).

It belongs to the NAD-dependent DNA ligase family. LigA subfamily. Mg(2+) serves as cofactor. It depends on Mn(2+) as a cofactor.

The enzyme catalyses NAD(+) + (deoxyribonucleotide)n-3'-hydroxyl + 5'-phospho-(deoxyribonucleotide)m = (deoxyribonucleotide)n+m + AMP + beta-nicotinamide D-nucleotide.. In terms of biological role, DNA ligase that catalyzes the formation of phosphodiester linkages between 5'-phosphoryl and 3'-hydroxyl groups in double-stranded DNA using NAD as a coenzyme and as the energy source for the reaction. It is essential for DNA replication and repair of damaged DNA. The protein is DNA ligase of Streptococcus suis (strain 98HAH33).